Here is a 558-residue protein sequence, read N- to C-terminus: MEIILFLTMMVMIAYVFSGYLYRVALVQSSRVDLIFTRFENMCFKIIGTDLEHMSAKTYVKHFLAFNGFMGLITFVLLIVQQWLFLNPNHNLNQSIDLAFNTAISFLTNSNLQHYNGESGVTYLTQMIVMTYLMFTSSASGYAVCIAMLRRLTGLTNIIGNFYQDIVRFIVRVLLPLSCLISILLMTQGVPQTLHANLMIRTLSGHIQHIAFGPIASLESIKHLGTNGGGFLAGNSATPFENPNIWSDFIEMGSMMLLPMSMLFLFGRMLSRHGKRVHRHALILFVAMFFIFIAILTLTMWSEYRGNPILANLGIYGPNMEGKEVRFGAGLSALFTVITTAFTTGSVNNMHDSLTPLGGLGPMVLMMLNVVFGGEGVGLMNLLIYVLLTVFICSLMVGKTPEYLNMPIGAREMKCIVLVFLIHPILILVFSALAFMIPGASESITNPSFHGISQVMYEMTSAAANNGSGFEGLKDDTTFWNISTGIIMLLSRYIPIILQLLIASSLVNKKSYHQDKYTIAIDKPYFGVSLIVFIVLLSGLTFIPVLLLGPIGEFLTLK.

A run of 12 helical transmembrane segments spans residues 1–21, 66–86, 127–147, 166–186, 245–265, 281–301, 327–347, 354–374, 377–397, 416–436, 482–502, and 531–551; these read MEII…SGYL, FNGF…WLFL, MIVM…VCIA, IVRF…ILLM, IWSD…MLFL, ALIL…LTMW, FGAG…TGSV, LTPL…VFGG, VGLM…SLMV, IVLV…LAFM, ISTG…QLLI, and IVFI…LGPI.

Belongs to the KdpA family. The system is composed of three essential subunits: KdpA, KdpB and KdpC.

The protein resides in the cell membrane. Functionally, part of the high-affinity ATP-driven potassium transport (or Kdp) system, which catalyzes the hydrolysis of ATP coupled with the electrogenic transport of potassium into the cytoplasm. This subunit binds the extracellular potassium ions and delivers the ions to the membrane domain of KdpB through an intramembrane tunnel. The polypeptide is Potassium-transporting ATPase potassium-binding subunit (Staphylococcus aureus (strain bovine RF122 / ET3-1)).